Consider the following 368-residue polypeptide: Alanine racemase (368 aa).

Catalysis depends on Lys35, which acts as the Proton acceptor; specific for D-alanine. Lys35 is modified (N6-(pyridoxal phosphate)lysine). Arg130 lines the substrate pocket. Catalysis depends on Tyr253, which acts as the Proton acceptor; specific for L-alanine. Substrate is bound at residue Met305.

This sequence belongs to the alanine racemase family. The cofactor is pyridoxal 5'-phosphate.

The enzyme catalyses L-alanine = D-alanine. The protein operates within amino-acid biosynthesis; D-alanine biosynthesis; D-alanine from L-alanine: step 1/1. In terms of biological role, catalyzes the interconversion of L-alanine and D-alanine. May also act on other amino acids. This chain is Alanine racemase (alr), found in Cupriavidus metallidurans (strain ATCC 43123 / DSM 2839 / NBRC 102507 / CH34) (Ralstonia metallidurans).